Reading from the N-terminus, the 802-residue chain is Leucine--tRNA ligase (802 aa).

Residues 40–51 (PYPSGAGLHVGH) carry the 'HIGH' region motif. A 'KMSKS' region motif is present at residues 576–580 (KMSKS). ATP is bound at residue lysine 579.

The protein belongs to the class-I aminoacyl-tRNA synthetase family.

The protein localises to the cytoplasm. It carries out the reaction tRNA(Leu) + L-leucine + ATP = L-leucyl-tRNA(Leu) + AMP + diphosphate. The sequence is that of Leucine--tRNA ligase from Bacillus anthracis (strain A0248).